The primary structure comprises 185 residues: Ribosome-recycling factor (185 aa).

Belongs to the RRF family.

It localises to the cytoplasm. In terms of biological role, responsible for the release of ribosomes from messenger RNA at the termination of protein biosynthesis. May increase the efficiency of translation by recycling ribosomes from one round of translation to another. The polypeptide is Ribosome-recycling factor (Neisseria meningitidis serogroup A / serotype 4A (strain DSM 15465 / Z2491)).